A 399-amino-acid polypeptide reads, in one-letter code: Keratin, type I cytoskeletal 19 (399 aa).

The interval 1-78 (MTSYSYRQSS…ATSDGLLAGN (78 aa)) is head. Arg-7 is subject to Omega-N-methylarginine. Phosphoserine occurs at positions 14 and 22. Arg-24 is modified (asymmetric dimethylarginine; alternate). Position 24 is an omega-N-methylarginine; alternate (Arg-24). An Omega-N-methylarginine modification is found at Arg-32. Phosphoserine occurs at positions 35 and 40. Residues Arg-43 and Arg-51 each carry the omega-N-methylarginine modification. Ser-57 and Ser-71 each carry phosphoserine. The interval 79-114 (EKLTMQNLNDRLASYLEKVRALEEANGDLEVKIRDW) is coil 1A. The IF rod domain maps to 79 to 390 (EKLTMQNLND…NLLEGQDAYF (312 aa)). A linker 1 region spans residues 115-132 (YQKQGPGPARDYSHYFKT). Positions 133 to 224 (IEDLRDQILG…KNHEEEMSVL (92 aa)) are coil 1B. The tract at residues 225-247 (KGQVGGQVSVEVDSAPGIDLAKI) is linker 12. The segment at 243–389 (DLAKILSDMR…RNLLEGQDAY (147 aa)) is necessary for interaction with PNN. The interval 248–386 (LSDMRSQYEV…ATYRNLLEGQ (139 aa)) is coil 2. The residue at position 322 (Thr-322) is a Phosphothreonine. A rod-like helical tail region spans residues 387–399 (DAYFNDLSLAKAL). Ser-394 carries the phosphoserine modification.

This sequence belongs to the intermediate filament family. Heterotetramer of two type I and two type II keratins. Interacts with PNN and the actin-binding domain of DMD.

In terms of biological role, involved in the organization of myofibers. Together with KRT8, helps to link the contractile apparatus to dystrophin at the costameres of striated muscle. The sequence is that of Keratin, type I cytoskeletal 19 (KRT19) from Bos taurus (Bovine).